A 146-amino-acid chain; its full sequence is Alpha-amylase inhibitor BMAI-1 (146 aa).

An N-terminal signal peptide occupies residues proline 1 to asparagine 14. Asparagine 125 carries an N-linked (GlcNAc...) asparagine glycan.

It belongs to the protease inhibitor I6 (cereal trypsin/alpha-amylase inhibitor) family. As to quaternary structure, monomer. Five disulfide bonds, which are essential for the inhibitor activity, are probably present. Post-translationally, glycosylated. In terms of tissue distribution, endosperm.

The protein resides in the secreted. Could be involved in insect defense mechanisms. Inhibits insect-type alpha-amylase. The polypeptide is Alpha-amylase inhibitor BMAI-1 (IAM1) (Hordeum vulgare (Barley)).